The chain runs to 967 residues: Mediator of RNA polymerase II transcription subunit 14 (967 aa).

It belongs to the Mediator complex subunit 14 family. As to quaternary structure, component of the Mediator complex.

Its subcellular location is the nucleus. Component of the Mediator complex, a coactivator involved in the regulated transcription of nearly all RNA polymerase II-dependent genes. Mediator functions as a bridge to convey information from gene-specific regulatory proteins to the basal RNA polymerase II transcription machinery. Mediator is recruited to promoters by direct interactions with regulatory proteins and serves as a scaffold for the assembly of a functional preinitiation complex with RNA polymerase II and the general transcription factors. This is Mediator of RNA polymerase II transcription subunit 14 (RGR1) from Eremothecium gossypii (strain ATCC 10895 / CBS 109.51 / FGSC 9923 / NRRL Y-1056) (Yeast).